Reading from the N-terminus, the 1161-residue chain is Integrin alpha-D (1161 aa).

Residues 1-17 form the signal peptide; sequence MTFGTVLLLSVLASYHG. Over 18-1099 the chain is Extracellular; sequence FNLDVEEPTI…MVLEEDEVYN (1082 aa). FG-GAP repeat units follow at residues 19–76 and 77–136; these read NLDV…MCQP and IPLH…IIQT. Asn59 is a glycosylation site (N-linked (GlcNAc...) asparagine). A disulfide bond links Cys67 and Cys74. Residues Asn87 and Asn99 are each glycosylated (N-linked (GlcNAc...) asparagine). A disulfide bridge connects residues Cys106 and Cys124. The region spanning 150 to 332 is the VWFA domain; it reads DIVFLIDGSG…SIQKQLQEKI (183 aa). 5 FG-GAP repeats span residues 339–390, 391–442, 443–503, 506–564, and 569–629; these read QSRA…PTFI, NMSQ…SRQW, RKKA…RVQW, DAVL…SGIS, and QRIA…FSPV. N-linked (GlcNAc...) asparagine glycosylation occurs at Asn391. Positions 465, 467, 469, 473, 529, 531, 533, 537, 592, 596, and 600 each coordinate Ca(2+). Cys654 and Cys709 form a disulfide bridge. N-linked (GlcNAc...) asparagine glycans are attached at residues Asn690 and Asn732. Intrachain disulfides connect Cys768–Cys774 and Cys845–Cys860. Residues Asn872 and Asn956 are each glycosylated (N-linked (GlcNAc...) asparagine). Disulfide bonds link Cys993–Cys1017 and Cys1022–Cys1027. N-linked (GlcNAc...) asparagine glycosylation occurs at Asn1045. Residues 1100 to 1120 traverse the membrane as a helical segment; it reads AIPIIMGSSVGALLLLALITA. Residues 1121 to 1161 are Cytoplasmic-facing; that stretch reads TLYKLGFFKRHYKEMLEDKPEDTATFSGDDFSCVAPNVPLS. A GFFKR motif motif is present at residues 1126–1130; the sequence is GFFKR.

It belongs to the integrin alpha chain family. As to quaternary structure, heterodimer of an alpha and a beta subunit. Alpha-D associates with beta-2. In terms of tissue distribution, expressed moderately on myelomonocytic cell lines and subsets of peripheral blood leukocytes and strongly on tissue-specialized cells, including macrophages foam cells within atherosclerotic plaques, and on splenic red pulp macrophages.

It localises to the membrane. Integrin alpha-D/beta-2 is a receptor for ICAM3 and VCAM1. May play a role in the atherosclerotic process such as clearing lipoproteins from plaques and in phagocytosis of blood-borne pathogens, particulate matter, and senescent erythrocytes from the blood. This Homo sapiens (Human) protein is Integrin alpha-D (ITGAD).